A 138-amino-acid chain; its full sequence is Putative pre-16S rRNA nuclease (138 aa).

It belongs to the YqgF nuclease family.

Its subcellular location is the cytoplasm. Could be a nuclease involved in processing of the 5'-end of pre-16S rRNA. This is Putative pre-16S rRNA nuclease from Cronobacter sakazakii (strain ATCC BAA-894) (Enterobacter sakazakii).